The sequence spans 264 residues: 4-hydroxy-tetrahydrodipicolinate reductase (264 aa).

8-13 (GPRGNM) provides a ligand contact to NAD(+). Lys-36 contacts NADP(+). NAD(+) contacts are provided by residues 97–99 (GTT) and 123–126 (APNF). The active-site Proton donor/acceptor is His-153. (S)-2,3,4,5-tetrahydrodipicolinate is bound at residue His-154. Lys-157 (proton donor) is an active-site residue. 163–164 (GT) is a binding site for (S)-2,3,4,5-tetrahydrodipicolinate.

This sequence belongs to the DapB family.

The protein resides in the cytoplasm. The enzyme catalyses (S)-2,3,4,5-tetrahydrodipicolinate + NAD(+) + H2O = (2S,4S)-4-hydroxy-2,3,4,5-tetrahydrodipicolinate + NADH + H(+). It carries out the reaction (S)-2,3,4,5-tetrahydrodipicolinate + NADP(+) + H2O = (2S,4S)-4-hydroxy-2,3,4,5-tetrahydrodipicolinate + NADPH + H(+). The protein operates within amino-acid biosynthesis; L-lysine biosynthesis via DAP pathway; (S)-tetrahydrodipicolinate from L-aspartate: step 4/4. In terms of biological role, catalyzes the conversion of 4-hydroxy-tetrahydrodipicolinate (HTPA) to tetrahydrodipicolinate. This chain is 4-hydroxy-tetrahydrodipicolinate reductase, found in Shouchella clausii (strain KSM-K16) (Alkalihalobacillus clausii).